Consider the following 146-residue polypeptide: Large ribosomal subunit protein uL15 (146 aa).

Residues 1–10 (MTLKLHDLRP) show a composition bias toward basic and acidic residues. A disordered region spans residues 1–41 (MTLKLHDLRPARGSKTARTRVGRGDGSKGKTAGRGTKGTRA).

Belongs to the universal ribosomal protein uL15 family. In terms of assembly, part of the 50S ribosomal subunit.

Binds to the 23S rRNA. The protein is Large ribosomal subunit protein uL15 of Mycobacterium bovis (strain BCG / Pasteur 1173P2).